A 571-amino-acid chain; its full sequence is Isthmin-2 (571 aa).

Residues 1-26 (MRALRDRAGLLLCVLLLAALLEAALG) form the signal peptide. Disordered stretches follow at residues 30-60 (KKPR…LKEE), 116-141 (ANTT…LREE), and 257-294 (EKDR…DEEE). A compositionally biased stretch (polar residues) spans 116 to 131 (ANTTLSTPNPDTQASA). A glycan (N-linked (GlcNAc...) asparagine) is linked at N117. Over residues 257–268 (EKDRAPGEKGEE) the composition is skewed to basic and acidic residues. Over residues 269-294 (KEEDEDYPSEDIEGEDQEDKEEDEEE) the composition is skewed to acidic residues. N300 is a glycosylation site (N-linked (GlcNAc...) asparagine). Residues 327–371 (EPQKEWSPWSPCSGNCSTGKQQRTRPCGYGCTATETRTCDLPSCP) enclose the TSP type-1 domain. Intrachain disulfides connect C338–C365, C342–C370, and C353–C357. An N-linked (GlcNAc...) asparagine glycan is attached at N392. Residues 396 to 559 (MHDQDVDSCE…RACTDNPLEE (164 aa)) form the AMOP domain.

Belongs to the isthmin family. In terms of tissue distribution, expressed at high levels in the placenta and at moderate levels in the pancreas, kidney, heart, liver, lung, brain and skeletal muscle.

It localises to the secreted. This chain is Isthmin-2 (ISM2), found in Homo sapiens (Human).